The primary structure comprises 259 residues: MLMVISPAKTLDYRTPPVTARHTLPRYLDHAAELMVRLRELTPQAIAELMSLSDKLAGLNAARYAEWTPDFTPANAKQALLAFKGDVYTGLDAEDFDEADFDFAQAHLRMLSGLYGVLRPLDLMQPYRLEMGTKLANARGKDLYAFWGERISLWLNEALAEQGDDILLNLASNEYFSAVRRPLLRGRVIDTEFRDLKNDQYKIVSFYAKQARGRMARYVIKERLRDPEGLKDFDERGYRFSISHSTPERLVFLRDRPMD.

It belongs to the UPF0246 family.

This is UPF0246 protein Avin_11220 from Azotobacter vinelandii (strain DJ / ATCC BAA-1303).